We begin with the raw amino-acid sequence, 119 residues long: Ribonuclease P protein component (119 aa).

It belongs to the RnpA family. As to quaternary structure, consists of a catalytic RNA component (M1 or rnpB) and a protein subunit.

It catalyses the reaction Endonucleolytic cleavage of RNA, removing 5'-extranucleotides from tRNA precursor.. RNaseP catalyzes the removal of the 5'-leader sequence from pre-tRNA to produce the mature 5'-terminus. It can also cleave other RNA substrates such as 4.5S RNA. The protein component plays an auxiliary but essential role in vivo by binding to the 5'-leader sequence and broadening the substrate specificity of the ribozyme. The polypeptide is Ribonuclease P protein component (Serratia proteamaculans (strain 568)).